The sequence spans 253 residues: 28 kDa inner dynein arm light chain, axonemal (253 aa).

A disordered region spans residues 19-44; that stretch reads TSKDKGKGAKGTPGKKGALPPVEQKP. Residues 160–239 adopt a coiled-coil conformation; that stretch reads IRKALQTEQG…LKQQLETFLV (80 aa).

It belongs to the inner dynein arm light chain family.

It is found in the cytoplasm. Its subcellular location is the cytoskeleton. It localises to the flagellum axoneme. Plays a dynamic role in flagellar motility. May be necessary for stable assembly of a subset of inner dynein arms or for the binding of these arms to the outer doublet microtubules of the axoneme. This Chlamydomonas reinhardtii (Chlamydomonas smithii) protein is 28 kDa inner dynein arm light chain, axonemal (IDA4).